The following is an 849-amino-acid chain: MAVEKLSPGMQQYLDIKKDYPDAFLLFRMGDFYELFYDDAVNAAQILEISLTSRNKNAENPIPMAGVPYHSAQQYIDVLVESGYKVAIAEQMEDPKEAKGVVKREVVQVITPGTVVDSSKPDSANNFLVALDYSDGLYGLAYMDLVTGEFQVTSLEDFALVCGEIRNLKAREVVLGYALPEAEEQVLAGQMNLLLSYVQTALDDVQLLGEELSPMERQAAGKLLEYVHRTQMRELSHLKKAQHYEIKDFLQMDYATKASLDLTENARSGKKHGSLYWLMDETKTAMGGRMLRSWIQRPLIDEARISQRQNVVEVFLDHFFERSDLTESLKGVYDIERLASRVSFGKTNPKELLQLAATLGNVPQIKAILQGIGSPHLARLIEGLDPIPELAGLISSAISPDAPHIITEGNIIQTGFDETLDQYRLVLREGTGWIAELEVKERANSGISNLKIDYNKKDGYYFHVTNSQLAHVPSHFFRKATLKNSERFGTEELARIEGEMLEAREKSANLEYEIFMRIREEAGKYIQRLQALAQTLAAVDVLQSFAAVAEQQHLVRPVFTAERRLQIEKGRHAVVEKVMGAQSYIPNSILLDQETDIQLITGPNMSGKSTYMRQLAIIVIMAQMGSYVPAQSASLPLFDAIFTRIGAADDLVSGQSTFMVEMMEANRAIRQASERSLILFDELGRGTATYDGMALAQAIIEHIHHYTGAKTLFATHYHELTALEESLEHLENVHVATLEKDGQVTFLHKIEPGPADKSYGIHVAKIAGLPEKLLERADSILSHLESQDTGLGSELPTASRPKQSQVAEQMSLFAEGTENPVLTELRDLDIYNMTPLEVMAAVAELKKKL.

Residue 602–609 coordinates ATP; it reads GPNMSGKS.

It belongs to the DNA mismatch repair MutS family.

Functionally, this protein is involved in the repair of mismatches in DNA. It is possible that it carries out the mismatch recognition step. This protein has a weak ATPase activity. The chain is DNA mismatch repair protein MutS from Streptococcus sanguinis (strain SK36).